The chain runs to 336 residues: Alcohol dehydrogenase, propanol-preferring (336 aa).

Positions 37, 58, 89, 92, 95, 103, and 145 each coordinate Zn(2+).

Belongs to the zinc-containing alcohol dehydrogenase family. Requires Zn(2+) as cofactor.

It carries out the reaction a primary alcohol + NAD(+) = an aldehyde + NADH + H(+). The catalysed reaction is a secondary alcohol + NAD(+) = a ketone + NADH + H(+). Functionally, preferred specificity is towards 1-propanol. This Escherichia coli (strain K12) protein is Alcohol dehydrogenase, propanol-preferring (adhP).